The chain runs to 525 residues: Glutamyl-tRNA(Gln) amidotransferase subunit A, mitochondrial (525 aa).

Catalysis depends on charge relay system residues lysine 76 and serine 168. The Acyl-ester intermediate role is filled by serine 192.

It belongs to the amidase family. GatA subfamily. Subunit of the heterotrimeric GatCAB amidotransferase (AdT) complex, composed of A (QRSL1), B (GATB) and C (GATC) subunits.

Its subcellular location is the mitochondrion. It carries out the reaction L-glutamyl-tRNA(Gln) + L-glutamine + ATP + H2O = L-glutaminyl-tRNA(Gln) + L-glutamate + ADP + phosphate + H(+). Allows the formation of correctly charged Gln-tRNA(Gln) through the transamidation of misacylated Glu-tRNA(Gln) in the mitochondria. The reaction takes place in the presence of glutamine and ATP through an activated gamma-phospho-Glu-tRNA(Gln). The protein is Glutamyl-tRNA(Gln) amidotransferase subunit A, mitochondrial (Qrsl1) of Rattus norvegicus (Rat).